Reading from the N-terminus, the 256-residue chain is ATG8-interacting protein 1 (256 aa).

Residues 14–17 carry the AIM (Atg8-family-interacting motif) motif; sequence WEVV. Residues 181 to 200 form a helical membrane-spanning segment; it reads ANAIWSLFFAAAVTGLVVLG. An AIM (Atg8-family-interacting motif) motif is present at residues 208 to 211; sequence WQVL.

In terms of assembly, interacts with ATG8F. Interacts with ATG8H. Interacts with APE1 and PSBS/NPQ4.

Its subcellular location is the endoplasmic reticulum membrane. It localises to the membrane. The protein resides in the plastid. It is found in the chloroplast membrane. In terms of biological role, involved in a special stress-induced plastid-to-vacuole protein trafficking pathway. Interacts with ATG8F in plastid bodies to subsequently enable their delivery to the vacuole by an autophagic pathway. Interacts with the plastid proteins APE1 and PSBS/NPQ4 and may recruit them as cargo into plastid bodies that may be recognized by the autophagy machinery for degradation in the vacuole. Involved in the alleviation of damage caused by salt stress during plant development, probably through its involvement in plastid-to-vacuole and ER-to-vacuole trafficking. Plays a role in seed germination in response to exogenous abscisic acid (ABA) treatment. The protein is ATG8-interacting protein 1 of Arabidopsis thaliana (Mouse-ear cress).